The following is a 117-amino-acid chain: Ig heavy chain V region 5-84 (117 aa).

A signal peptide spans 1-19 (MNFGLSLIFLVLVLKGVLC). The tract at residues 20 to 49 (EVKLVESGGGLVQPGGSLKLSCAASGFTFS) is framework-1. The cysteines at positions 41 and 115 are disulfide-linked. A complementarity-determining-1 region spans residues 50-54 (SYTMS). The framework-2 stretch occupies residues 55-68 (WVRQTPEKRLEWVA). The tract at residues 69–85 (YISNGGGSTYYPDTVKG) is complementarity-determining-2. Residues 86–117 (RFTISRDNAKNNLYLQMSSLKSEDTAMYYCAR) form a framework-3 region.

The chain is Ig heavy chain V region 5-84 from Mus musculus (Mouse).